A 162-amino-acid polypeptide reads, in one-letter code: UPF0114 protein Sputw3181_3501 (162 aa).

3 helical membrane passes run 15-35, 53-73, and 136-156; these read IMAP…IKFF, LVLV…IVMV, and IMWY…MGYL.

This sequence belongs to the UPF0114 family.

The protein resides in the cell membrane. This Shewanella sp. (strain W3-18-1) protein is UPF0114 protein Sputw3181_3501.